A 900-amino-acid polypeptide reads, in one-letter code: Translation initiation factor IF-2 (900 aa).

Composition is skewed to basic and acidic residues over residues 119–158, 165–191, and 198–229; these read AAKA…EKQE, ADEK…KADA, and EEAR…DHHV. The interval 119–306 is disordered; the sequence is AAKAEAEAKA…NARSVAPESM (188 aa). The segment covering 257 to 272 has biased composition (low complexity); it reads SANAGNNANSNSNAGS. The tr-type G domain occupies 400-569; sequence PRAPVVTIMG…LLESEVLELK (170 aa). A G1 region spans residues 409-416; that stretch reads GHVDHGKT. 409-416 lines the GTP pocket; sequence GHVDHGKT. Positions 434 to 438 are G2; it reads GITQH. The G3 stretch occupies residues 455-458; it reads DTPG. Residues 455–459 and 509–512 contribute to the GTP site; these read DTPGH and NKID. Residues 509 to 512 are G4; sequence NKID. Residues 545–547 form a G5 region; that stretch reads SAK.

This sequence belongs to the TRAFAC class translation factor GTPase superfamily. Classic translation factor GTPase family. IF-2 subfamily.

Its subcellular location is the cytoplasm. One of the essential components for the initiation of protein synthesis. Protects formylmethionyl-tRNA from spontaneous hydrolysis and promotes its binding to the 30S ribosomal subunits. Also involved in the hydrolysis of GTP during the formation of the 70S ribosomal complex. This is Translation initiation factor IF-2 from Shewanella piezotolerans (strain WP3 / JCM 13877).